The primary structure comprises 159 residues: Protein Smg homolog (159 aa).

It belongs to the Smg family.

The chain is Protein Smg homolog from Dichelobacter nodosus (strain VCS1703A).